Consider the following 630-residue polypeptide: A-type voltage-gated potassium channel KCND2 (630 aa).

The Cytoplasmic segment spans residues 1 to 184 (MAAGVAAWLP…FENPHTSTMA (184 aa)). Positions 2–20 (AAGVAAWLPFARAAAIGWM) are interaction with KCNIP1, KCNIP2, and other family members. A Phosphothreonine modification is found at Thr38. The segment at 71–90 (ERDFFYHPETQQYFFDRDPD) is interaction with KCNIP1. Zn(2+) contacts are provided by His105, Cys111, Cys132, and Cys133. Residues 185-206 (LVFYYVTGFFIAVSVIANVVET) form a helical membrane-spanning segment. Over 207 to 226 (VPCGSSPGHIKELPCGERYA) the chain is Extracellular. The chain crosses the membrane as a helical span at residues 227 to 249 (VAFFCLDTACVMIFTVEYLLRLA). Residues 250–256 (AAPSRYR) lie on the Cytoplasmic side of the membrane. Residues 257–281 (FVRSVMSIIDVVAILPYYIGLVMTD) traverse the membrane as a helical segment. Over 282 to 287 (NEDVSG) the chain is Extracellular. Residues 288–307 (AFVTLRVFRVFRIFKFSRHS) traverse the membrane as a helical; Voltage-sensor segment. The Cytoplasmic segment spans residues 308–321 (QGLRILGYTLKSCA). The interval 308–321 (QGLRILGYTLKSCA) is S4-S5 linker. Residues 322–345 (SELGFLLFSLTMAIIIFATVMFYA) form a helical membrane-spanning segment. Residues 346-357 (EKGSSASKFTSI) are Extracellular-facing. Positions 358-369 (PAAFWYTIVTMT) form an intramembrane region, helical. K(+) contacts are provided by Thr370, Leu371, Gly372, and Tyr373. A Selectivity filter motif is present at residues 370-375 (TLGYGD). An intramembrane segment occupies 370–377 (TLGYGDMV). The Extracellular segment spans residues 378-380 (PKT). The chain crosses the membrane as a helical span at residues 381–403 (IAGKIFGSICSLSGVLVIALPVP). Residues 404–630 (VIVSNFSRIY…GGNIVRVSAL (227 aa)) are Cytoplasmic-facing. The residue at position 438 (Ser438) is a Phosphoserine. The tract at residues 474–489 (FETQHHHLLHCLEKTT) is required for dendritic targeting. The segment at 474-630 (FETQHHHLLH…GGNIVRVSAL (157 aa)) is important for normal channel activation and inactivation, for interaction with KCNIP2, and probably other family members as well. 4 positions are modified to phosphoserine: Ser548, Ser552, Ser572, and Ser575. The disordered stretch occupies residues 600 to 623 (IPTPPVTTPEGDDRPESPEYSGGN). Thr602 and Thr607 each carry phosphothreonine. Residue Ser616 is modified to Phosphoserine. The short motif at 627–630 (VSAL) is the PDZ-binding element.

This sequence belongs to the potassium channel family. D (Shal) (TC 1.A.1.2) subfamily. Kv4.2/KCND2 sub-subfamily. Homotetramer or heterotetramer with KCND1 or KCND3. Associates with the regulatory subunits KCNIP2, KCNIP3 and KCNIP4. Interacts with the regulatory subunit KCNIP1; this interaction mediates the capture of both the N- and C-terminus of KCND2, preventing N-type inactivation and stabilizing the S6 conformation, thereby accelerating closed state inactivation and recovery. Interacts with DPP10, DLG4 and DLG1. In vivo, probably exists as heteromeric complex containing variable proportions of KCND1, KCND2, KCND3, KCNIP1, KCNIP2, KCNIP3, KCNIP4, DPP6 and DPP10. The tetrameric channel can associate with up to four regulatory subunits, such as KCNIP2 or KCNIP4. Interaction with KCNIP3 promotes tetramerization and formation of a functional potassium channel. Interaction with four KCNIP4 chains does not reduce interaction with DPP10. Probably part of a complex consisting of KCNIP1, KCNIP2 isoform 3 and KCND2. Interacts with FLNA and FLNC. Interacts with NCS1/FREQ. Identified in a complex with cAMP-dependent protein kinase (PKA), CAV3, AKAP6 and KCND3 in cardiac myocytes. Interacts (via S1 and S2 helices) with DPP6; this interaction stabilizes the conformation of the S1-S2 helices and facilitates S4 conformational change, including S4 sliding up and down, thereby accelerating activation, inactivation, and recovery. Post-translationally, phosphorylation at Ser-438 in response to MAPK activation is increased in stimulated dendrites. Interaction with KCNIP2 and DPP6 propomtes phosphorylation by PKA at Ser-552. Phosphorylation at Ser-552 has no effect on interaction with KCNIP3, but is required for the regulation of channel activity by KCNIP3. Phosphorylation at Ser-552 leads to KCND2 internalization. Phosphorylated by MAPK in response to signaling via the metabotropic glutamate receptor GRM5. Phosphorylation at Ser-616 is required for the down-regulation of neuronal A-type currents in response to signaling via GRM5. In terms of tissue distribution, detected in brain cortex, hippocampus, dentate gyrus, thalamus and cerebellum. Detected in neurons from the primary visual cortex. Detected in the supraoptic nucleus in hypothalamus, in hippocampus and the habenular nucleus of the thalamus. Detected in the bed nucleus of the stria terminalis. Detected in dendritic fields in the hippocampus CA1 layer, in stratum radiatum, stratum oriens, stratum lacunosum-moleculare and stratum pyramidale. Detected in dendritic fields in the hippocampus CA3 layer and in dentate gyrus. Detected in the cerebellum granule cell layer, where it localizes at synapses. Detected in the main olfactory bulb, especially in the granule cell layer and the external plexiform layer, but also the mitral layer. Detected in heart atrium and ventricle. Detected in heart left ventricle (at protein level). Highly expressed in heart and throughout the brain, with similar levels in cortex and hypothalamus, and much higher levels in hippocampus, dentate gyrus and the habenular nucleus of the thalamus. Detected in brain, and at lower levels in heart atrium and ventricle. Detected in neurons from the bed nucleus of the stria terminalis. Detected in aorta, cardiac and smooth muscle.

The protein resides in the cell membrane. The protein localises to the cell projection. It localises to the dendrite. It is found in the synapse. Its subcellular location is the perikaryon. The protein resides in the postsynaptic cell membrane. The protein localises to the dendritic spine. It localises to the sarcolemma. It is found in the cell junction. Its subcellular location is the membrane. The protein resides in the caveola. The catalysed reaction is K(+)(in) = K(+)(out). Inhibited by 5 mM 4-aminopyridine (4-AP). Not inhibited by dendrotoxins and by tetraethylammonium (TEA). Inhibited by 10 mM flecainide and 20 mM quinidine. Inhibited by the heteropodatoxins HpTx(1), HpTx(2), and HpTx(3). In terms of biological role, voltage-gated potassium channel that mediates transmembrane potassium transport in excitable membranes, primarily in the brain, but also in rodent heart. Mediates the major part of the dendritic A-type current I(SA) in brain neurons. This current is activated at membrane potentials that are below the threshold for action potentials. It regulates neuronal excitability, prolongs the latency before the first spike in a series of action potentials, regulates the frequency of repetitive action potential firing, shortens the duration of action potentials and regulates the back-propagation of action potentials from the neuronal cell body to the dendrites. Contributes to the regulation of the circadian rhythm of action potential firing in suprachiasmatic nucleus neurons, which regulates the circadian rhythm of locomotor activity. Functions downstream of the metabotropic glutamate receptor GRM5 and plays a role in neuronal excitability and in nociception mediated by activation of GRM5. Mediates the transient outward current I(to) in rodent heart left ventricle apex cells, but not in human heart, where this current is mediated by another family member. Forms tetrameric potassium-selective channels through which potassium ions pass in accordance with their electrochemical gradient. The channel alternates between opened and closed conformations in response to the voltage difference across the membrane. Can form functional homotetrameric channels and heterotetrameric channels that contain variable proportions of KCND2 and KCND3; channel properties depend on the type of pore-forming alpha subunits that are part of the channel. In vivo, membranes probably contain a mixture of heteromeric potassium channel complexes. Interaction with specific isoforms of the regulatory subunits KCNIP1, KCNIP2, KCNIP3 or KCNIP4 strongly increases expression at the cell surface and thereby increases channel activity; it modulates the kinetics of channel activation and inactivation, shifts the threshold for channel activation to more negative voltage values, shifts the threshold for inactivation to less negative voltages and accelerates recovery after inactivation. Likewise, interaction with DPP6 or DPP10 promotes expression at the cell membrane and regulates both channel characteristics and activity. Upon depolarization, the channel goes from a resting closed state (C state) to an activated but non-conducting state (C* state), from there, the channel may either inactivate (I state) or open (O state). In Rattus norvegicus (Rat), this protein is A-type voltage-gated potassium channel KCND2.